Here is a 742-residue protein sequence, read N- to C-terminus: Two-component response regulator-like PRR37 (742 aa).

In terms of domain architecture, Response regulatory spans 63 to 181 (KVLLVDSDDS…ELKNLWQHVW (119 aa)). The segment covering 186–195 (SSSGSGSESG) has biased composition (low complexity). 6 disordered regions span residues 186 to 249 (SSSG…SWTK), 290 to 346 (PCTS…PLQN), 375 to 402 (DAQQ…NRDN), 478 to 570 (MKSN…VQSN), 590 to 671 (NGGS…GNDM), and 697 to 742 (NFGK…AADR). The segment covering 236–248 (DNGSGTQAQSSWT) has biased composition (polar residues). Residues 299–313 (KQKETNDDFKGKDLE) show a composition bias toward basic and acidic residues. The segment covering 318–330 (RNLNTAYQSSPNE) has biased composition (polar residues). Basic and acidic residues predominate over residues 331-341 (RSIKPTDRRNE). Polar residues predominate over residues 380-390 (ARATNAPNCSS). Over residues 490–502 (GSNGSSNNNDMGS) the composition is skewed to low complexity. Over residues 503–512 (TTKNVVTKPS) the composition is skewed to polar residues. Residues 618-634 (NGSNSGSNNGSNGQNGS) show a composition bias toward low complexity. Residues 656–667 (GPGGGNGSGSGS) show a composition bias toward gly residues. Positions 682–724 (RVAAVIKFRQKRKERNFGKKVRYQSRKRLAEQRPRVRGQFVRQ) constitute a CCT domain. Over residues 697–708 (NFGKKVRYQSRK) the composition is skewed to basic residues. Low complexity predominate over residues 719–731 (GQFVRQAVQDQQQ).

This sequence belongs to the ARR-like family.

The protein resides in the nucleus. Controls photoperiodic flowering response. Seems to be one of the component of the circadian clock. Expression of several members of the ARR-like family is controlled by circadian rhythm. The particular coordinated sequential expression of PRR73, PRR37, PRR95, PRR59 and PPR1 result to circadian waves that may be at the basis of the endogenous circadian clock. The protein is Two-component response regulator-like PRR37 (PRR37) of Oryza sativa subsp. indica (Rice).